The following is a 141-amino-acid chain: Small ribosomal subunit protein uS12 (141 aa).

Positions 118 to 141 (TGVDKRRQQRSAYGAKRPKADKKK) are disordered.

This sequence belongs to the universal ribosomal protein uS12 family. In terms of assembly, part of the 30S ribosomal subunit. Contacts proteins S8 and S17. May interact with IF1 in the 30S initiation complex.

Its function is as follows. With S4 and S5 plays an important role in translational accuracy. Functionally, interacts with and stabilizes bases of the 16S rRNA that are involved in tRNA selection in the A site and with the mRNA backbone. Located at the interface of the 30S and 50S subunits, it traverses the body of the 30S subunit contacting proteins on the other side and probably holding the rRNA structure together. The combined cluster of proteins S8, S12 and S17 appears to hold together the shoulder and platform of the 30S subunit. This chain is Small ribosomal subunit protein uS12, found in Mycoplasmoides gallisepticum (strain R(low / passage 15 / clone 2)) (Mycoplasma gallisepticum).